We begin with the raw amino-acid sequence, 280 residues long: 4-diphosphocytidyl-2-C-methyl-D-erythritol kinase (280 aa).

The active site involves Lys-8. 91-101 (PVSAGLAGGST) is a binding site for ATP. Asp-133 is an active-site residue.

This sequence belongs to the GHMP kinase family. IspE subfamily.

The enzyme catalyses 4-CDP-2-C-methyl-D-erythritol + ATP = 4-CDP-2-C-methyl-D-erythritol 2-phosphate + ADP + H(+). The protein operates within isoprenoid biosynthesis; isopentenyl diphosphate biosynthesis via DXP pathway; isopentenyl diphosphate from 1-deoxy-D-xylulose 5-phosphate: step 3/6. In terms of biological role, catalyzes the phosphorylation of the position 2 hydroxy group of 4-diphosphocytidyl-2C-methyl-D-erythritol. The chain is 4-diphosphocytidyl-2-C-methyl-D-erythritol kinase from Clostridium botulinum (strain Eklund 17B / Type B).